A 216-amino-acid chain; its full sequence is UPF0301 protein Nham_3550 (216 aa).

Residues 1-10 show a composition bias toward basic residues; the sequence is MSAARKRPGT. Residues 1–25 are disordered; the sequence is MSAARKRPGTGRRQTDDADTGAPDQ.

It belongs to the UPF0301 (AlgH) family.

The chain is UPF0301 protein Nham_3550 from Nitrobacter hamburgensis (strain DSM 10229 / NCIMB 13809 / X14).